The chain runs to 200 residues: Recombination protein RecR (200 aa).

A C4-type zinc finger spans residues Cys59 to Cys74. Residues Ser82–Pro177 enclose the Toprim domain.

Belongs to the RecR family.

In terms of biological role, may play a role in DNA repair. It seems to be involved in an RecBC-independent recombinational process of DNA repair. It may act with RecF and RecO. In Phenylobacterium zucineum (strain HLK1), this protein is Recombination protein RecR.